A 301-amino-acid chain; its full sequence is Structure-specific endonuclease subunit SLX1 (301 aa).

Residues 12-95 (AFYCCYLLRS…QHPYQTRFIK (84 aa)) enclose the GIY-YIG domain. Residues 216-283 (CAICEKIVDY…IPTSGQCPNC (68 aa)) form an SLX1-type zinc finger.

The protein belongs to the SLX1 family. In terms of assembly, forms a heterodimer with SLX4. Requires a divalent metal cation as cofactor.

The protein resides in the nucleus. Its function is as follows. Catalytic subunit of the SLX1-SLX4 structure-specific endonuclease that resolves DNA secondary structures generated during DNA repair and recombination. Has endonuclease activity towards branched DNA substrates, introducing single-strand cuts in duplex DNA close to junctions with ss-DNA. In Eremothecium gossypii (strain ATCC 10895 / CBS 109.51 / FGSC 9923 / NRRL Y-1056) (Yeast), this protein is Structure-specific endonuclease subunit SLX1.